The primary structure comprises 367 residues: uncharacterized protein (367 aa).

Helical transmembrane passes span 18-38, 239-259, 296-316, and 329-349; these read ILAL…GILG, VSYF…IGIG, ILGV…GYLI, and AIFY…ISAL.

Belongs to the ABC-4 integral membrane protein family.

Its subcellular location is the cell membrane. This is an uncharacterized protein from Methanocaldococcus jannaschii (strain ATCC 43067 / DSM 2661 / JAL-1 / JCM 10045 / NBRC 100440) (Methanococcus jannaschii).